Consider the following 170-residue polypeptide: Lipoprotein signal peptidase (170 aa).

3 helical membrane-spanning segments follow: residues 12–32 (WYWIVVLVFIADQLSKQWVLS), 67–87 (WQRWLFTFVAVGFSILLSVWL), and 94–113 (MWRLNLAYTLVIGGALGNLI). Active-site residues include Asp-123 and Asp-141. The helical transmembrane segment at 133 to 153 (HFPAFNIADSAICIGAGLIIL) threads the bilayer.

This sequence belongs to the peptidase A8 family.

The protein localises to the cell inner membrane. It catalyses the reaction Release of signal peptides from bacterial membrane prolipoproteins. Hydrolyzes -Xaa-Yaa-Zaa-|-(S,diacylglyceryl)Cys-, in which Xaa is hydrophobic (preferably Leu), and Yaa (Ala or Ser) and Zaa (Gly or Ala) have small, neutral side chains.. The protein operates within protein modification; lipoprotein biosynthesis (signal peptide cleavage). Its function is as follows. This protein specifically catalyzes the removal of signal peptides from prolipoproteins. This Shewanella piezotolerans (strain WP3 / JCM 13877) protein is Lipoprotein signal peptidase.